The chain runs to 119 residues: uncharacterized protein (119 aa).

The ABC transmembrane type-1 domain occupies 1–112 (MVFNMRSTRG…FISSCLLLVL (112 aa)). Transmembrane regions (helical) follow at residues 51-73 (VLAWSRAIGEFGATLMLAGATRF) and 91-111 (FEIAIGASLWLLFISSCLLLV).

This sequence belongs to the binding-protein-dependent transport system permease family. CysTW subfamily.

Its subcellular location is the cell membrane. This is an uncharacterized protein from Haemophilus influenzae (strain ATCC 51907 / DSM 11121 / KW20 / Rd).